Consider the following 466-residue polypeptide: Tyrosinase HcTyr1 (466 aa).

H43, H78, H87, H211, H215, and H238 together coordinate Cu cation.

This sequence belongs to the tyrosinase family. Monomer. Formation of a dimer is observed when the protein is in its holo-form. The cofactor is Cu(2+). Post-translationally, in vitro, the C-terminal lid-domain is slowly cleaved off in an autoprocessive time dependent manner, leading to the formation of cleaved-HcTyr1. The processing rate is not influenced by factors such as pH and added metal ions.

The enzyme catalyses L-tyrosine + O2 = L-dopaquinone + H2O. The catalysed reaction is 2 L-tyrosine + O2 = 2 L-dopa. It carries out the reaction 2 L-dopa + O2 = 2 L-dopaquinone + 2 H2O. Its activity is regulated as follows. Cleavage of the lid-domain increases activity levels, affinity for substrate and turnover rate. Exhibits high saline tolerance. Copper-containing oxidase that catalyzes the conversion of L-tyrosine to L-dopa and then to L-dopaquinone. Can use various phenols such as p-coumaric acid, phenol, pyrocatechol, syringol or pyrogallol. Accepts several of the constituents of lignin and potentially participates in lignin functionalization. This is Tyrosinase HcTyr1 from Hahella sp. (strain CCB-MM4).